Consider the following 101-residue polypeptide: uncharacterized protein (101 aa).

This is an uncharacterized protein from Mycoplasma pneumoniae (strain ATCC 29342 / M129 / Subtype 1) (Mycoplasmoides pneumoniae).